The sequence spans 85 residues: U4-theraphotoxin-Hhn1c (85 aa).

The N-terminal stretch at 1–22 (MKVTLIAILTCAAVLVLHTTAA) is a signal peptide. Positions 23-48 (EELEAESQLMEVGMPDTELAAVDEER) are excised as a propeptide. Disulfide bonds link C52/C66, C56/C77, and C71/C82.

The protein belongs to the neurotoxin 12 (Hwtx-2) family. 02 (Hwtx-2) subfamily. In terms of tissue distribution, expressed by the venom gland.

The protein localises to the secreted. Functionally, postsynaptic neurotoxin. The protein is U4-theraphotoxin-Hhn1c of Cyriopagopus hainanus (Chinese bird spider).